The primary structure comprises 248 residues: Deoxyribose-phosphate aldolase (248 aa).

Catalysis depends on Asp117, which acts as the Proton donor/acceptor. Lys179 acts as the Schiff-base intermediate with acetaldehyde in catalysis. Lys208 acts as the Proton donor/acceptor in catalysis.

Belongs to the DeoC/FbaB aldolase family. DeoC type 1 subfamily.

It is found in the cytoplasm. It catalyses the reaction 2-deoxy-D-ribose 5-phosphate = D-glyceraldehyde 3-phosphate + acetaldehyde. It functions in the pathway carbohydrate degradation; 2-deoxy-D-ribose 1-phosphate degradation; D-glyceraldehyde 3-phosphate and acetaldehyde from 2-deoxy-alpha-D-ribose 1-phosphate: step 2/2. Functionally, catalyzes a reversible aldol reaction between acetaldehyde and D-glyceraldehyde 3-phosphate to generate 2-deoxy-D-ribose 5-phosphate. The chain is Deoxyribose-phosphate aldolase from Thermotoga petrophila (strain ATCC BAA-488 / DSM 13995 / JCM 10881 / RKU-1).